We begin with the raw amino-acid sequence, 499 residues long: Probable cytosol aminopeptidase (499 aa).

The Mn(2+) site is built by Lys269 and Asp274. Lys281 is an active-site residue. 3 residues coordinate Mn(2+): Asp292, Asp351, and Glu353. Arg355 is a catalytic residue.

It belongs to the peptidase M17 family. Requires Mn(2+) as cofactor.

It is found in the cytoplasm. It carries out the reaction Release of an N-terminal amino acid, Xaa-|-Yaa-, in which Xaa is preferably Leu, but may be other amino acids including Pro although not Arg or Lys, and Yaa may be Pro. Amino acid amides and methyl esters are also readily hydrolyzed, but rates on arylamides are exceedingly low.. The catalysed reaction is Release of an N-terminal amino acid, preferentially leucine, but not glutamic or aspartic acids.. Presumably involved in the processing and regular turnover of intracellular proteins. Catalyzes the removal of unsubstituted N-terminal amino acids from various peptides. The sequence is that of Probable cytosol aminopeptidase from Haemophilus ducreyi (strain 35000HP / ATCC 700724).